Consider the following 617-residue polypeptide: MVNKTAQLKQALENRILILDGAMGTMIQKYKLTEDDFRGEKFKKSAVDSVAEWCTWPVGELLKHALVKGITTCQTLPSPLDVIEGPLMAGMDVVGDLFGDGKMFLPQVVKSARVMKQSVAYLEPFXNATKQKGSSNGKVVIATVKGDVHDIGKNIVSVVMQCNNFEVIDLGVMVPADKIIQTAINQKTDIIALSGLITPSLDEMEYFLGEMTRLGLNLPVMIGGATTSKEHTAIKLYPKYKQHCVFYTSNASRAVTVCATLMNPEGRAALWEQFKKDYEKIQQSFANSKPLRKQLSIEEARDGFSGEWADYVPPTPKQTGIVEFKNVPIAELRKFIDWSPFFRIWGLMGCYPDAFDYPEGGEEARKVWNDAQVVLDELEQNHKLNPSGILGIFPAERVGDDVVLFSDEERTQTIGTAYGLRQQTERGKNSKSPFNFCLSDFIADRQSGKKNWFGMFAVCVGVEEMELVEGYKAAGDDYNAILLQAVGDRLAEAMAEYLHFELRTRIWGYTQEEFDNQGLINENYVGIRPAPGYPSWPEHTEKALIWDLLEVEQRIGMKLTESYAMWPAASVCGWYFTHPASNYFTLGRIDEDQAQDYAKRKGWDEREMMKWLGVAMK.

The 102-residue stretch at 33–134 (TEDDFRGEKF…FXNATKQKGS (102 aa)) folds into the B12-binding N-terminal domain. Methylcob(III)alamin-binding positions include Glu84, 146-150 (GDVHD), His149, Ser194, Thr198, and Ala251. The B12-binding domain maps to 136–272 (NGKVVIATVK…NPEGRAALWE (137 aa)). The 330-residue stretch at 288-617 (SKPLRKQLSI…MMKWLGVAMK (330 aa)) folds into the AdoMet activation domain. S-adenosyl-L-methionine-binding positions include Asp337, Arg528, and 583 to 584 (YF).

The protein belongs to the vitamin-B12 dependent methionine synthase family.

This is an uncharacterized protein from Haemophilus influenzae (strain ATCC 51907 / DSM 11121 / KW20 / Rd).